A 226-amino-acid chain; its full sequence is Potassium/proton antiporter CemA (226 aa).

3 consecutive transmembrane segments (helical) span residues 7 to 27 (FTSLPYLASIVFLPWWISLSF), 111 to 131 (IICFAILSGYSILGNEGLFIL), and 186 to 206 (IISGLVSTFPVILDTILKYWI).

This sequence belongs to the CemA family.

It is found in the plastid. Its subcellular location is the chloroplast inner membrane. It carries out the reaction K(+)(in) + H(+)(out) = K(+)(out) + H(+)(in). Functionally, contributes to K(+)/H(+) antiport activity by supporting proton efflux to control proton extrusion and homeostasis in chloroplasts in a light-dependent manner to modulate photosynthesis. Prevents excessive induction of non-photochemical quenching (NPQ) under continuous-light conditions. Indirectly promotes efficient inorganic carbon uptake into chloroplasts. The protein is Potassium/proton antiporter CemA of Buxus microphylla (Littleleaf boxwood).